A 434-amino-acid chain; its full sequence is MTEQSNRVFLLSLGCSKNTVDSERLMAQAEAAGVVFTESASDAETIIINTCGFIADAKEESINETLAAITEKESGRVRKIFVMGCLPELYRSELQTELPEVDGFFGTRELPAILTAIGARYRSELHLHRSLTAPGHTSFLKISEGCSRSCSFCSIPRIRGPYISQPLDQLLREARLLQEKGVQELNIIAQDITLYGVDLYGRQMLNDLLLRLSDMAFHWIRLLYAYPLNFPLEVIETMSQRGNICNYLDLPLQHCNDRILRSMNRGITKEGELALIEAIRQKNPDIRLRTTMIAGYPGETRQEFEELLEFAATVRFDRLGCFSYCHEEFSPAFALEDSVPEEEKQSRTAELMELQEGISEEKNKRLEGREIAVCIDRIEENTAWGRTEWDAPEVDNECSLEGAGHTIAPGSFCLARIDGSSPYELFGTVLKVPE.

In terms of domain architecture, MTTase N-terminal spans 6–122 (NRVFLLSLGC…ILTAIGARYR (117 aa)). [4Fe-4S] cluster-binding residues include cysteine 15, cysteine 51, cysteine 85, cysteine 146, cysteine 150, and cysteine 153. One can recognise a Radical SAM core domain in the interval 132–361 (TAPGHTSFLK…MELQEGISEE (230 aa)). Positions 364–431 (KRLEGREIAV…PYELFGTVLK (68 aa)) constitute a TRAM domain.

The protein belongs to the methylthiotransferase family. RimO subfamily. The cofactor is [4Fe-4S] cluster.

The protein localises to the cytoplasm. It carries out the reaction L-aspartate(89)-[ribosomal protein uS12]-hydrogen + (sulfur carrier)-SH + AH2 + 2 S-adenosyl-L-methionine = 3-methylsulfanyl-L-aspartate(89)-[ribosomal protein uS12]-hydrogen + (sulfur carrier)-H + 5'-deoxyadenosine + L-methionine + A + S-adenosyl-L-homocysteine + 2 H(+). Functionally, catalyzes the methylthiolation of an aspartic acid residue of ribosomal protein uS12. In Chlorobium phaeovibrioides (strain DSM 265 / 1930) (Prosthecochloris vibrioformis (strain DSM 265)), this protein is Ribosomal protein uS12 methylthiotransferase RimO.